The primary structure comprises 106 residues: UPF0145 protein Pput_2816 (106 aa).

The protein belongs to the UPF0145 family.

The sequence is that of UPF0145 protein Pput_2816 from Pseudomonas putida (strain ATCC 700007 / DSM 6899 / JCM 31910 / BCRC 17059 / LMG 24140 / F1).